Consider the following 309-residue polypeptide: Dihydroorotate dehydrogenase B (NAD(+)), catalytic subunit (309 aa).

FMN is bound by residues Ser-21 and 45–46 (KA). Residues Lys-45 and 69-73 (NAIGL) contribute to the substrate site. FMN contacts are provided by Asn-99 and Asn-127. A substrate-binding site is contributed by Asn-127. The active-site Nucleophile is Cys-130. The FMN site is built by Lys-165 and Ile-191. 192–193 (NT) contacts substrate. FMN contacts are provided by residues Gly-217, 243–244 (GG), and 265–266 (GT).

The protein belongs to the dihydroorotate dehydrogenase family. Type 1 subfamily. In terms of assembly, heterotetramer of 2 PyrK and 2 PyrD type B subunits. FMN serves as cofactor.

It localises to the cytoplasm. It catalyses the reaction (S)-dihydroorotate + NAD(+) = orotate + NADH + H(+). It participates in pyrimidine metabolism; UMP biosynthesis via de novo pathway; orotate from (S)-dihydroorotate (NAD(+) route): step 1/1. Its function is as follows. Catalyzes the conversion of dihydroorotate to orotate with NAD(+) as electron acceptor. This is Dihydroorotate dehydrogenase B (NAD(+)), catalytic subunit (pyrD) from Bacillus cereus (strain B4264).